The sequence spans 324 residues: Formimidoylglutamase (324 aa).

Mn(2+) contacts are provided by His-124, Asp-153, His-155, Asp-157, Asp-245, and Asp-247.

Belongs to the arginase family. It depends on Mn(2+) as a cofactor.

The enzyme catalyses N-formimidoyl-L-glutamate + H2O = formamide + L-glutamate. Its pathway is amino-acid degradation; L-histidine degradation into L-glutamate; L-glutamate from N-formimidoyl-L-glutamate (hydrolase route): step 1/1. Its function is as follows. Catalyzes the conversion of N-formimidoyl-L-glutamate to L-glutamate and formamide. In Hahella chejuensis (strain KCTC 2396), this protein is Formimidoylglutamase.